The chain runs to 89 residues: Small ribosomal subunit protein uS17 (89 aa).

The protein belongs to the universal ribosomal protein uS17 family. Part of the 30S ribosomal subunit.

Functionally, one of the primary rRNA binding proteins, it binds specifically to the 5'-end of 16S ribosomal RNA. This chain is Small ribosomal subunit protein uS17, found in Delftia acidovorans (strain DSM 14801 / SPH-1).